A 529-amino-acid chain; its full sequence is MDDLQSQNLSMDMTDSPPTLANNRLENRMAQLITTEAWNINSTDLVKKALVTVPAPSILNPPAESQSGMALKVAATVLQPLCLGESPVVMPIHMQVEGSSAPELNPNGNATYVMTTQGPVQLPVVLEQHVFQHLNSPLVLPQEAPCSSNAIHNNLFQGAEDSEAQPQLLDLRIPSQPQEPALPFEAVLQNLFPTQGSLGPPPCQPPPGYAPVPPQPFNSPLSPLVPPATLLVPYPVIVPLPVPVPIPIPVPVPQSTESKFSPTFPKPPSSFGLHSFKGTQTTLEKDELKPLDILQSKEYFQLSRHTVIKMGSENEALDLSMKSVPWLKAGEASPPVFQEDAALDLSLAAHRKAEAPPETLYNNSGSADIQGHTILEKLSSGMEMPFAPAKCSEASAMMESHSSNSNGTEMVSQPSHPGSELKAENNIEILSESQAAKVIVSVEDAVPAIFCGKIKGLSGVSTKNFSFKREDSVLQGYDINSQGEESLGNAEPLRKPIKNRSIKLKKVNSQEIHMLPIKKQRLATFFPRK.

Disordered regions lie at residues 1 to 21 (MDDLQSQNLSMDMTDSPPTLA) and 400 to 419 (SHSSNSNGTEMVSQPSHPGS). Over residues 407–416 (GTEMVSQPSH) the composition is skewed to polar residues.

The chain is Retinoic acid-induced protein 2 (Rai2) from Mus musculus (Mouse).